The primary structure comprises 412 residues: Divalent metal cation transporter MntH (412 aa).

The next 11 membrane-spanning stretches (helical) occupy residues 19 to 39 (LALMGPAFIAAIGYIDPGNFA), 46 to 66 (ASFGYQLLWVVVWANLMAMLI), 94 to 114 (VWFYWVQAEIIAMATDLAEFI), 122 to 142 (LILGVSLLQGAVLTGIATFLI), 156 to 176 (VIGGLLLFVAAAYIVELFFSQ), 196 to 216 (AVFLAAGVLGATIMPHVIYLH), 241 to 261 (IAMTIAGFVNLAMMATAAAAF), 290 to 310 (IFGLSLVAAGLSSTVVGTLAG), 322 to 342 (IPLWVRRAVTMAPSFIVILMG), 348 to 368 (ILVMSQVLLSFGIALALVPLL), and 392 to 412 (AIVVLVVALNIWLLVGTALGL).

The protein belongs to the NRAMP family.

The protein localises to the cell inner membrane. Its function is as follows. H(+)-stimulated, divalent metal cation uptake system. In Cronobacter sakazakii (strain ATCC BAA-894) (Enterobacter sakazakii), this protein is Divalent metal cation transporter MntH.